Here is a 471-residue protein sequence, read N- to C-terminus: MASGQDKTHIDYAYELDITVKPDSRVPVFNREFATFTGAGVPLFSLGGGPIRYALAEVLAKFHARRGYYVVETPIIASTELFKVSGHIEFYRNNMYLFDIEGHEFAVKPMNCPYHILLFLNEVAKHRSKLPLPFKVFEFGRVHRYEPSGSIYGLLRVRGFTQDDAHIIVPGGRVIDVVYDVFEEMKLVLERLFKLGVSSETFKVRLSMSDKSLIGKEFMGSKEEWEGAEEALREAASRINEKYGIDIVELEGEAAFYGPKLDFIMMVEESGVSKEWQMGTIQFDFNLPRRFRLYDVVREEFGIEEVYIIHRALLGSIERFLGVYLEHRRGRMPFTLAPIQFAVIAVKTGGEVDREIEDLASSIAKGLLDKGFRVAVKGSSKTGLSSDVRHIESTAKPAVNVFIGAKEVREKVLDVRVFDLESMKRRRLAIAYGDAADAVENLAAVAEELESPVRSLSGQAPRIPADFSFML.

The segment at 8–333 (THIDYAYELD…YLEHRRGRMP (326 aa)) is catalytic. Positions 112, 166, and 310 each coordinate Zn(2+).

It belongs to the class-II aminoacyl-tRNA synthetase family. Homodimer. Probably interacts with its editing subunit. Requires Zn(2+) as cofactor.

It localises to the cytoplasm. The catalysed reaction is tRNA(Thr) + L-threonine + ATP = L-threonyl-tRNA(Thr) + AMP + diphosphate + H(+). Functionally, catalyzes the attachment of threonine to tRNA(Thr) in a two-step reaction: L-threonine is first activated by ATP to form Thr-AMP and then transferred to the acceptor end of tRNA(Thr). This protein is probably not able to deacylate mischarged L-seryl-tRNA(Thr) as it lacks the appropriate domain. The protein is Threonine--tRNA ligase catalytic subunit of Aeropyrum pernix (strain ATCC 700893 / DSM 11879 / JCM 9820 / NBRC 100138 / K1).